The chain runs to 585 residues: Zinc finger protein C11D3.17 (585 aa).

2 consecutive C2H2-type zinc fingers follow at residues 31-53 (FPCDQCAKRFTRHENLTRHKACH) and 59-82 (IPCPYCEIKCKRKDLLKRHIQRFH). Thr-553 is subject to Phosphothreonine.

Its subcellular location is the nucleus. In Schizosaccharomyces pombe (strain 972 / ATCC 24843) (Fission yeast), this protein is Zinc finger protein C11D3.17.